The following is an 80-amino-acid chain: Conotoxin Cl10.1 (80 aa).

The N-terminal stretch at 1–20 (MTTLGMTMLVLLLLLPLATC) is a signal peptide. Residues 21 to 36 (LGDGERSPWDSLLRAL) constitute a propeptide that is removed on maturation.

In terms of processing, contains 4 disulfide bonds. In terms of tissue distribution, expressed by the venom duct.

It is found in the secreted. The polypeptide is Conotoxin Cl10.1 (Californiconus californicus (California cone)).